A 160-amino-acid polypeptide reads, in one-letter code: Transcription elongation factor GreA (160 aa).

A coiled-coil region spans residues 1-72 (MAEKTYVMTL…QIQILETKIR (72 aa)).

The protein belongs to the GreA/GreB family.

Necessary for efficient RNA polymerase transcription elongation past template-encoded arresting sites. The arresting sites in DNA have the property of trapping a certain fraction of elongating RNA polymerases that pass through, resulting in locked ternary complexes. Cleavage of the nascent transcript by cleavage factors such as GreA or GreB allows the resumption of elongation from the new 3'terminus. GreA releases sequences of 2 to 3 nucleotides. The protein is Transcription elongation factor GreA of Streptococcus thermophilus (strain CNRZ 1066).